A 497-amino-acid polypeptide reads, in one-letter code: UDP-N-acetylmuramoyl-L-alanyl-D-glutamate--2,6-diaminopimelate ligase (497 aa).

A UDP-N-acetyl-alpha-D-muramoyl-L-alanyl-D-glutamate-binding site is contributed by Ser33. An ATP-binding site is contributed by 119-125 (GTNGKTT). Residues 161–162 (TT), Ser188, Gln194, and Arg196 contribute to the UDP-N-acetyl-alpha-D-muramoyl-L-alanyl-D-glutamate site. An N6-carboxylysine modification is found at Lys228. Meso-2,6-diaminopimelate-binding positions include Arg390, 414 to 417 (DNPR), Gly465, and Glu469. Positions 414–417 (DNPR) match the Meso-diaminopimelate recognition motif motif.

It belongs to the MurCDEF family. MurE subfamily. It depends on Mg(2+) as a cofactor. Carboxylation is probably crucial for Mg(2+) binding and, consequently, for the gamma-phosphate positioning of ATP.

Its subcellular location is the cytoplasm. It catalyses the reaction UDP-N-acetyl-alpha-D-muramoyl-L-alanyl-D-glutamate + meso-2,6-diaminopimelate + ATP = UDP-N-acetyl-alpha-D-muramoyl-L-alanyl-gamma-D-glutamyl-meso-2,6-diaminopimelate + ADP + phosphate + H(+). Its pathway is cell wall biogenesis; peptidoglycan biosynthesis. Its function is as follows. Catalyzes the addition of meso-diaminopimelic acid to the nucleotide precursor UDP-N-acetylmuramoyl-L-alanyl-D-glutamate (UMAG) in the biosynthesis of bacterial cell-wall peptidoglycan. This chain is UDP-N-acetylmuramoyl-L-alanyl-D-glutamate--2,6-diaminopimelate ligase, found in Synechococcus elongatus (strain ATCC 33912 / PCC 7942 / FACHB-805) (Anacystis nidulans R2).